The chain runs to 549 residues: Probable serine/threonine-protein kinase WNK5 (549 aa).

Positions 25–283 (GRFREVLGKG…AKELLADPFL (259 aa)) constitute a Protein kinase domain. Residues 105 to 108 (TELF) and K155 each bind ATP. The active-site Proton acceptor is the D172. A disordered region spans residues 414–490 (ESFGHEDDED…SPAIDDDQNQ (77 aa)). Positions 452-463 (DDSSNDVIPDMD) are enriched in acidic residues. Residues 467-476 (RSSNRLLNSS) are compositionally biased toward low complexity. S504 carries the post-translational modification Phosphoserine. The disordered stretch occupies residues 525-549 (RGRGFDPNTNELQPQPSSTDFIRRC). The span at 531–549 (PNTNELQPQPSSTDFIRRC) shows a compositional bias: polar residues.

This sequence belongs to the protein kinase superfamily. Ser/Thr protein kinase family. WNK subfamily. As to quaternary structure, interacts with AHK4.

The catalysed reaction is L-seryl-[protein] + ATP = O-phospho-L-seryl-[protein] + ADP + H(+). The enzyme catalyses L-threonyl-[protein] + ATP = O-phospho-L-threonyl-[protein] + ADP + H(+). Functionally, regulates flowering time by modulating the photoperiod pathway. In Arabidopsis thaliana (Mouse-ear cress), this protein is Probable serine/threonine-protein kinase WNK5 (WNK5).